The sequence spans 335 residues: Replication factor C subunit 4 (335 aa).

Position 56–63 (56–63 (SGPPGTGK)) interacts with ATP.

The protein belongs to the activator 1 small subunits family. Heterotetramer of subunits RFC2, RFC3, RFC4 and RFC5 that can form a complex with RFC1. In terms of tissue distribution, expressed in roots, leaves, shoot apical meristem (SAM), flag leaves and panicles.

Its subcellular location is the nucleus. May be involved in DNA replication and thus regulate cell proliferation. This chain is Replication factor C subunit 4 (RFC4), found in Oryza sativa subsp. japonica (Rice).